The sequence spans 239 residues: Ribonuclease 3 (239 aa).

The 126-residue stretch at 12 to 137 (ISRLEALIGY…LIATLYLDGG (126 aa)) folds into the RNase III domain. Glu50 contacts Mg(2+). Asp54 is a catalytic residue. Residues Asp123 and Glu126 each contribute to the Mg(2+) site. Residue Glu126 is part of the active site. The DRBM domain maps to 162–231 (DAKTELQEWA…ATRLLEREGV (70 aa)).

This sequence belongs to the ribonuclease III family. As to quaternary structure, homodimer. Mg(2+) is required as a cofactor.

Its subcellular location is the cytoplasm. The catalysed reaction is Endonucleolytic cleavage to 5'-phosphomonoester.. In terms of biological role, digests double-stranded RNA. Involved in the processing of primary rRNA transcript to yield the immediate precursors to the large and small rRNAs (23S and 16S). Processes some mRNAs, and tRNAs when they are encoded in the rRNA operon. Processes pre-crRNA and tracrRNA of type II CRISPR loci if present in the organism. The chain is Ribonuclease 3 from Agrobacterium fabrum (strain C58 / ATCC 33970) (Agrobacterium tumefaciens (strain C58)).